Here is a 334-residue protein sequence, read N- to C-terminus: MTHDKKNAKIIPFPHLKDRLVEKGMSSLKEKKYQEALELFSEAMKYDDTESDLHLGMAICFLELGELEEAESVCEKMLKEGYGHYFTVLQVYMTILIQLKKYEEVKSTIEAVLEENQLPAESAEQFYKLLDFSRKMTDPDREDEAWAEEYEDTIDTEKVLASPEEQMNLIHSLKDRNVAKYTGLLKTILQDPSAHPIIKTMIVMLLAEHEYSKPVHISKFGESLTIEPSEIVPPDAAPILHRVLRVLDETLGNENPTLYAAVEELWRRHLYVLYPFQPKLLSADLWAAALHKVGYEMHGIEIESEELHMMYEFTDRELDEACTMLKDIEEISYL.

3 TPR repeats span residues 17–50 (KDRL…DDTE), 52–84 (DLHL…GYGH), and 195–230 (HPII…EPSE).

This Bacillus subtilis (strain 168) protein is TPR repeat-containing protein YsoA (ysoA).